A 785-amino-acid polypeptide reads, in one-letter code: Arrestin domain-containing protein D (785 aa).

Disordered stretches follow at residues glutamine 29–proline 69, isoleucine 172–threonine 205, serine 326–asparagine 367, serine 435–asparagine 486, and tyrosine 608–glutamine 642. Low complexity predominate over residues leucine 173–threonine 205. The span at serine 435–asparagine 450 shows a compositional bias: low complexity. Residues serine 466–tyrosine 478 show a composition bias toward basic residues. Residues tyrosine 608 to asparagine 633 show a composition bias toward low complexity. The FYVE-type zinc finger occupies glutamate 682 to lysine 742. Positions 688, 691, 704, 707, 712, 715, 734, and 737 each coordinate Zn(2+). The segment at cysteine 688–phenylalanine 738 adopts an RING-type; degenerate zinc-finger fold.

This sequence belongs to the arrestin family.

The sequence is that of Arrestin domain-containing protein D (adcD) from Dictyostelium discoideum (Social amoeba).